We begin with the raw amino-acid sequence, 268 residues long: NAC transcription factor 29 (268 aa).

The 153-residue stretch at 9–161 (LPPGFRFHPT…EWVLCRIYKK (153 aa)) folds into the NAC domain. Residues 106–167 (VGVKKALVFY…IYKKRGASKL (62 aa)) mediate DNA binding.

As to expression, expressed in senescing leaves, petals and sepals.

Its subcellular location is the nucleus. Functionally, transcription activator that binds to, and transactivates the promoter of the abscisic aldehyde oxidase AAO3. Promotes chlorophyll degradation in leaves by enhancing transcription of AAO3, which leads to increased levels of the senescence-inducing hormone abscisic acid (ABA). Involved in the control of dehydration in senescing leaves. Binds to the DNA sequence 5'-CACGTAAGT-3' of SAG113 promoter. SAG113 acts as a negative regulator of ABA signaling for stomatal closure in leaves, and controls water loss during leaf senescence. Transcription factor of the NAC family involved in senescence. May function in the transition between active cell division and cell expansion. Required for normal seed development and morphology. In Arabidopsis thaliana (Mouse-ear cress), this protein is NAC transcription factor 29 (NAC029).